A 172-amino-acid chain; its full sequence is NAD(P)H-quinone oxidoreductase subunit I, chloroplastic (172 aa).

4Fe-4S ferredoxin-type domains are found at residues 55–84 (GRIHFEFDKCIACEVCVRVCPIDLPVVDWK) and 95–124 (LNYSIDFGICIFCGNCVEYCPTNCLSMTEE). C64, C67, C70, C74, C104, C107, C110, and C114 together coordinate [4Fe-4S] cluster.

The protein belongs to the complex I 23 kDa subunit family. In terms of assembly, NDH is composed of at least 16 different subunits, 5 of which are encoded in the nucleus. The cofactor is [4Fe-4S] cluster.

It localises to the plastid. The protein resides in the chloroplast thylakoid membrane. The enzyme catalyses a plastoquinone + NADH + (n+1) H(+)(in) = a plastoquinol + NAD(+) + n H(+)(out). It carries out the reaction a plastoquinone + NADPH + (n+1) H(+)(in) = a plastoquinol + NADP(+) + n H(+)(out). In terms of biological role, NDH shuttles electrons from NAD(P)H:plastoquinone, via FMN and iron-sulfur (Fe-S) centers, to quinones in the photosynthetic chain and possibly in a chloroplast respiratory chain. The immediate electron acceptor for the enzyme in this species is believed to be plastoquinone. Couples the redox reaction to proton translocation, and thus conserves the redox energy in a proton gradient. The protein is NAD(P)H-quinone oxidoreductase subunit I, chloroplastic of Olimarabidopsis pumila (Dwarf rocket).